Reading from the N-terminus, the 688-residue chain is Small ribosomal subunit protein mS39 (688 aa).

The transit peptide at methionine 1–tyrosine 37 directs the protein to the mitochondrion. Lysine 126 is subject to N6-acetyllysine. PPR repeat units lie at residues isoleucine 149 to valine 183, serine 184 to glutamate 219, asparagine 258 to alanine 292, aspartate 293 to proline 333, asparagine 334 to proline 370, serine 371 to aspartate 412, aspartate 415 to lysine 449, arginine 457 to proline 491, histidine 492 to phenylalanine 526, and proline 575 to proline 609. Positions glycine 667–lysine 688 are disordered.

It belongs to the mitochondrion-specific ribosomal protein mS39 family. Component of the mitochondrial ribosome small subunit (28S) which comprises a 12S rRNA and about 30 distinct proteins. Associated with the 12S mitochondrial rRNA (12S mt-rRNA).

The protein resides in the mitochondrion. Functionally, mitochondrial RNA-binding protein that has a role in mitochondrial translation. The sequence is that of Small ribosomal subunit protein mS39 (PTCD3) from Bos taurus (Bovine).